We begin with the raw amino-acid sequence, 531 residues long: Berberine bridge enzyme-like 9 (531 aa).

Positions 1-23 (MTSLTTQTLIITIFLLTIPTSFA) are cleaved as a signal peptide. A disulfide bond links C35 and C99. N-linked (GlcNAc...) asparagine glycosylation is found at N76, N164, N271, N300, N314, N400, and N485. In terms of domain architecture, FAD-binding PCMH-type spans 77-252 (MTRKPVAIVA…LAWKIKLVPV (176 aa)). Positions 114–177 (HDYDGMSYLS…DLRGFPAGIC (64 aa)) form a cross-link, 6-(S-cysteinyl)-8alpha-(pros-histidyl)-FAD (His-Cys).

Belongs to the oxygen-dependent FAD-linked oxidoreductase family. Requires FAD as cofactor. In terms of processing, the FAD cofactor is bound via a bicovalent 6-S-cysteinyl, 8alpha-N1-histidyl FAD linkage. Accumulates in cell walls of etiolated hypocotyls.

The protein resides in the secreted. The protein localises to the cell wall. This Arabidopsis thaliana (Mouse-ear cress) protein is Berberine bridge enzyme-like 9.